A 538-amino-acid polypeptide reads, in one-letter code: Chaperonin GroEL (538 aa).

ATP-binding positions include Thr-29–Pro-32, Asp-86–Thr-90, Gly-413, Asn-476–Ala-478, and Asp-492.

It belongs to the chaperonin (HSP60) family. Forms a cylinder of 14 subunits composed of two heptameric rings stacked back-to-back. Interacts with the co-chaperonin GroES.

The protein resides in the cytoplasm. The catalysed reaction is ATP + H2O + a folded polypeptide = ADP + phosphate + an unfolded polypeptide.. Together with its co-chaperonin GroES, plays an essential role in assisting protein folding. The GroEL-GroES system forms a nano-cage that allows encapsulation of the non-native substrate proteins and provides a physical environment optimized to promote and accelerate protein folding. This chain is Chaperonin GroEL, found in Staphylococcus aureus (strain Mu3 / ATCC 700698).